The primary structure comprises 486 residues: UDP-N-acetylmuramoyl-L-alanyl-D-glutamate--2,6-diaminopimelate ligase (486 aa).

Ser-34 provides a ligand contact to UDP-N-acetyl-alpha-D-muramoyl-L-alanyl-D-glutamate. 112–118 (GTAGKTS) lines the ATP pocket. Residues 154 to 155 (TT), Ser-181, Gln-187, and Arg-189 each bind UDP-N-acetyl-alpha-D-muramoyl-L-alanyl-D-glutamate. Lys-221 carries the N6-carboxylysine modification. Meso-2,6-diaminopimelate-binding positions include Arg-385, 409-412 (DNPR), Gly-457, and Glu-461. The short motif at 409 to 412 (DNPR) is the Meso-diaminopimelate recognition motif element.

Belongs to the MurCDEF family. MurE subfamily. It depends on Mg(2+) as a cofactor. Post-translationally, carboxylation is probably crucial for Mg(2+) binding and, consequently, for the gamma-phosphate positioning of ATP.

It localises to the cytoplasm. It catalyses the reaction UDP-N-acetyl-alpha-D-muramoyl-L-alanyl-D-glutamate + meso-2,6-diaminopimelate + ATP = UDP-N-acetyl-alpha-D-muramoyl-L-alanyl-gamma-D-glutamyl-meso-2,6-diaminopimelate + ADP + phosphate + H(+). Its pathway is cell wall biogenesis; peptidoglycan biosynthesis. In terms of biological role, catalyzes the addition of meso-diaminopimelic acid to the nucleotide precursor UDP-N-acetylmuramoyl-L-alanyl-D-glutamate (UMAG) in the biosynthesis of bacterial cell-wall peptidoglycan. The sequence is that of UDP-N-acetylmuramoyl-L-alanyl-D-glutamate--2,6-diaminopimelate ligase from Rhizobium meliloti (strain 1021) (Ensifer meliloti).